Consider the following 156-residue polypeptide: Small ribosomal subunit protein uS7 (156 aa).

It belongs to the universal ribosomal protein uS7 family. In terms of assembly, part of the 30S ribosomal subunit. Contacts proteins S9 and S11.

One of the primary rRNA binding proteins, it binds directly to 16S rRNA where it nucleates assembly of the head domain of the 30S subunit. Is located at the subunit interface close to the decoding center, probably blocks exit of the E-site tRNA. This chain is Small ribosomal subunit protein uS7, found in Methylobacterium nodulans (strain LMG 21967 / CNCM I-2342 / ORS 2060).